The following is a 165-amino-acid chain: Small ribosomal subunit protein bS16 (165 aa).

Belongs to the bacterial ribosomal protein bS16 family.

The chain is Small ribosomal subunit protein bS16 from Azobacteroides pseudotrichonymphae genomovar. CFP2.